The primary structure comprises 60 residues: Large ribosomal subunit protein bL32 (60 aa).

The segment at 1-23 (MAVPKRKKSKSRRNMHRSHHAIK) is disordered.

Belongs to the bacterial ribosomal protein bL32 family.

The chain is Large ribosomal subunit protein bL32 from Wolbachia sp. subsp. Brugia malayi (strain TRS).